The chain runs to 341 residues: Uroporphyrinogen decarboxylase (341 aa).

Residues 23 to 27 (RQAGR), aspartate 73, tyrosine 147, serine 202, and histidine 318 each bind substrate.

Belongs to the uroporphyrinogen decarboxylase family. Homodimer.

The protein resides in the cytoplasm. It catalyses the reaction uroporphyrinogen III + 4 H(+) = coproporphyrinogen III + 4 CO2. The protein operates within porphyrin-containing compound metabolism; protoporphyrin-IX biosynthesis; coproporphyrinogen-III from 5-aminolevulinate: step 4/4. Catalyzes the decarboxylation of four acetate groups of uroporphyrinogen-III to yield coproporphyrinogen-III. The polypeptide is Uroporphyrinogen decarboxylase (Erythrobacter litoralis (strain HTCC2594)).